Here is a 321-residue protein sequence, read N- to C-terminus: uncharacterized protein (321 aa).

The Extracellular portion of the chain corresponds to 1-6 (MDIIRK). Residues 7–29 (ISHFAGQTFGIWVIVFAVLGFSF) traverse the membrane as a helical segment. The Cytoplasmic portion of the chain corresponds to 30–34 (PSLFT). A helical transmembrane segment spans residues 35-57 (WISSYITIFLGIIMFGMGLTLQA). Topologically, residues 58-69 (DDFKELVRKPWQ) are extracellular. A helical membrane pass occupies residues 70-92 (VIIGVIAQYTIMPLVAFGLAFGL). At 93-97 (HLPAE) the chain is on the cytoplasmic side. Residues 98-120 (IAVGVILVGCCPGGTASNVMTFL) form a helical membrane-spanning segment. The Extracellular segment spans residues 121 to 129 (AKGNTALSV). A helical transmembrane segment spans residues 130–150 (AVTTISTLLAPVVTPLLIMLF). Residues 151–159 (AKEWLPVSP) are Cytoplasmic-facing. A helical transmembrane segment spans residues 160–180 (GSLFISILQAVLFPIIAGLIV). Over 181–190 (KMFFRKQVAK) the chain is Extracellular. The helical transmembrane segment at 191–211 (AVHALPLVSVIGIVAIVSAVV) threads the bilayer. Over 212-221 (SGNRENLLQS) the chain is Cytoplasmic. The chain crosses the membrane as a helical span at residues 222–242 (GLLIFSVVILHNGIGYLLGFL). Over 243 to 267 (CAKLLKMDYPSQKAIAIEVGMQNSG) the chain is Extracellular. Residues 268 to 288 (LGAALATAHFSPLSAVPSAIF) traverse the membrane as a helical segment. Residues 289 to 321 (SVWHNLSGSMLATYWSKKVKKKQAGSKSSNLSL) are Cytoplasmic-facing.

Belongs to the bile acid:sodium symporter (BASS) (TC 2.A.28) family.

It localises to the cell membrane. This is an uncharacterized protein from Bacillus subtilis (strain 168).